The following is a 568-amino-acid chain: Light-independent protochlorophyllide reductase subunit B (568 aa).

A [4Fe-4S] cluster-binding site is contributed by Asp36. Asp293 (proton donor) is an active-site residue. Residue 437–438 coordinates substrate; the sequence is GM. The interval 476-517 is disordered; sequence ANGHPEAGVSVGAAEPSAAPSRSVVTEESNRATTPSSSTVHP. A compositionally biased stretch (polar residues) spans 498 to 515; that stretch reads SVVTEESNRATTPSSSTV.

Belongs to the ChlB/BchB/BchZ family. As to quaternary structure, protochlorophyllide reductase is composed of three subunits; BchL, BchN and BchB. Forms a heterotetramer of two BchB and two BchN subunits. It depends on [4Fe-4S] cluster as a cofactor.

The enzyme catalyses chlorophyllide a + oxidized 2[4Fe-4S]-[ferredoxin] + 2 ADP + 2 phosphate = protochlorophyllide a + reduced 2[4Fe-4S]-[ferredoxin] + 2 ATP + 2 H2O. Its pathway is porphyrin-containing compound metabolism; bacteriochlorophyll biosynthesis (light-independent). In terms of biological role, component of the dark-operative protochlorophyllide reductase (DPOR) that uses Mg-ATP and reduced ferredoxin to reduce ring D of protochlorophyllide (Pchlide) to form chlorophyllide a (Chlide). This reaction is light-independent. The NB-protein (BchN-BchB) is the catalytic component of the complex. The protein is Light-independent protochlorophyllide reductase subunit B of Roseiflexus sp. (strain RS-1).